A 245-amino-acid chain; its full sequence is Proteolipid protein DM alpha (245 aa).

Transmembrane regions (helical) follow at residues 19–35, 71–87, 117–133, and 204–220; these read LIAT…FCGC, IIYG…VLLL, FIFL…GVFA, and LFIA…IALL.

It belongs to the myelin proteolipid protein family. As to expression, highly expressed in white matter in myelinating shark brain.

It localises to the membrane. In Squalus acanthias (Spiny dogfish), this protein is Proteolipid protein DM alpha.